Reading from the N-terminus, the 434-residue chain is MAEKSFKYIILGGGVSAGYAAKEFANQGVQPGELAVISKEAVAPYERPALSKGYLFPEGAARLPGFHCCVGSGGEKLLPESYKQKGIELILSTEIVKADLSAKSLVSATGDVFKYQTLIIATGSTVLRLTDFGVKGADSKNILYLREIDDADKLVEAIKAKKGGKAVVVGGGYIGLELSAVLRINNLDVTMVFPEPWCMPRLFTADIAAFYETYYTNKGVKIIKGTVASGFTAQPNGEVKEVQLKDGRTLEADIVIVGVGAKPLTSLFKGQVEEDKGGIKTDAFFKTSVPDVYAVGDVATFPLKMYGDVRRVEHVDHSRKSAEQAVKAIKAAEGGAAVEEYDYLPFFYSRSFDLSWQFYGDNVGDSVLFGDSNPSNPKPRFGAYWVQGGKVVGAFMEGGSGDENKALAKVAKARPSAESLDELVKQGISFAAKI.

Residues 13-16, E40, R47, K52, I95, and 146-147 contribute to the FAD site; these read GGVS and RE. Residues 171–177, E195, R201, and G260 each bind NAD(+); that span reads GGYIGLE. Residue 173–177 coordinates NADP(+); it reads YIGLE. Positions 201 and 260 each coordinate NADP(+). D297 provides a ligand contact to FAD. 313–314 serves as a coordination point for NAD(+); that stretch reads EH. An NADP(+)-binding site is contributed by 313 to 314; that stretch reads EH. V315 contacts FAD. R319 is an L-ascorbate binding site. Y348 lines the FAD pocket. Y348 is an NAD(+) binding site. Y348 contacts NADP(+). Residue R350 coordinates L-ascorbate. S416 carries the phosphoserine modification.

The protein belongs to the FAD-dependent oxidoreductase family. FAD is required as a cofactor.

It is found in the peroxisome matrix. The enzyme catalyses 2 monodehydro-L-ascorbate radical + NADH + H(+) = 2 L-ascorbate + NAD(+). Its function is as follows. Catalyzes the conversion of monodehydroascorbate to ascorbate, oxidizing NADH in the process. This is Monodehydroascorbate reductase 1, peroxisomal from Arabidopsis thaliana (Mouse-ear cress).